The following is a 366-amino-acid chain: Ribosomal RNA large subunit methyltransferase M (366 aa).

S-adenosyl-L-methionine is bound by residues serine 188, 221 to 224 (CPGG), aspartate 240, aspartate 260, and aspartate 277. Lysine 306 serves as the catalytic Proton acceptor.

This sequence belongs to the class I-like SAM-binding methyltransferase superfamily. RNA methyltransferase RlmE family. RlmM subfamily. As to quaternary structure, monomer.

It localises to the cytoplasm. The catalysed reaction is cytidine(2498) in 23S rRNA + S-adenosyl-L-methionine = 2'-O-methylcytidine(2498) in 23S rRNA + S-adenosyl-L-homocysteine + H(+). Catalyzes the 2'-O-methylation at nucleotide C2498 in 23S rRNA. This Escherichia coli O45:K1 (strain S88 / ExPEC) protein is Ribosomal RNA large subunit methyltransferase M.